A 453-amino-acid chain; its full sequence is UPF0210 protein Pcar_2119 (453 aa).

Belongs to the UPF0210 family. In terms of assembly, homodimer.

This is UPF0210 protein Pcar_2119 from Syntrophotalea carbinolica (strain DSM 2380 / NBRC 103641 / GraBd1) (Pelobacter carbinolicus).